The primary structure comprises 175 residues: ATP synthase subunit delta (175 aa).

The protein belongs to the ATPase delta chain family. As to quaternary structure, F-type ATPases have 2 components, F(1) - the catalytic core - and F(0) - the membrane proton channel. F(1) has five subunits: alpha(3), beta(3), gamma(1), delta(1), epsilon(1). F(0) has three main subunits: a(1), b(2) and c(10-14). The alpha and beta chains form an alternating ring which encloses part of the gamma chain. F(1) is attached to F(0) by a central stalk formed by the gamma and epsilon chains, while a peripheral stalk is formed by the delta and b chains.

Its subcellular location is the cell membrane. F(1)F(0) ATP synthase produces ATP from ADP in the presence of a proton or sodium gradient. F-type ATPases consist of two structural domains, F(1) containing the extramembraneous catalytic core and F(0) containing the membrane proton channel, linked together by a central stalk and a peripheral stalk. During catalysis, ATP synthesis in the catalytic domain of F(1) is coupled via a rotary mechanism of the central stalk subunits to proton translocation. Functionally, this protein is part of the stalk that links CF(0) to CF(1). It either transmits conformational changes from CF(0) to CF(1) or is implicated in proton conduction. In Lactococcus lactis subsp. lactis (strain IL1403) (Streptococcus lactis), this protein is ATP synthase subunit delta.